We begin with the raw amino-acid sequence, 102 residues long: Urease subunit beta (102 aa).

Belongs to the urease beta subunit family. Heterotrimer of UreA (gamma), UreB (beta) and UreC (alpha) subunits. Three heterotrimers associate to form the active enzyme.

It localises to the cytoplasm. It carries out the reaction urea + 2 H2O + H(+) = hydrogencarbonate + 2 NH4(+). Its pathway is nitrogen metabolism; urea degradation; CO(2) and NH(3) from urea (urease route): step 1/1. This Pseudomonas syringae pv. tomato (strain ATCC BAA-871 / DC3000) protein is Urease subunit beta.